The sequence spans 411 residues: Citrate synthase (411 aa).

Active-site residues include His304 and Asp363.

Belongs to the citrate synthase family.

It carries out the reaction oxaloacetate + acetyl-CoA + H2O = citrate + CoA + H(+). The protein operates within carbohydrate metabolism; tricarboxylic acid cycle; isocitrate from oxaloacetate: step 1/2. This Rickettsia akari protein is Citrate synthase (gltA).